A 339-amino-acid chain; its full sequence is Heat-inducible transcription repressor HrcA (339 aa).

The protein belongs to the HrcA family.

Its function is as follows. Negative regulator of class I heat shock genes (grpE-dnaK-dnaJ and groELS operons). Prevents heat-shock induction of these operons. In Clostridium perfringens (strain SM101 / Type A), this protein is Heat-inducible transcription repressor HrcA.